The chain runs to 519 residues: Maturase K (519 aa).

This sequence belongs to the intron maturase 2 family. MatK subfamily.

It localises to the plastid. Its subcellular location is the chloroplast. In terms of biological role, usually encoded in the trnK tRNA gene intron. Probably assists in splicing its own and other chloroplast group II introns. This Dioscorea elephantipes (Elephant's foot yam) protein is Maturase K.